A 304-amino-acid chain; its full sequence is UDP-3-O-acyl-N-acetylglucosamine deacetylase (304 aa).

Zn(2+)-binding residues include H77, H233, and D237. Residue H260 is the Proton donor of the active site.

The protein belongs to the LpxC family. It depends on Zn(2+) as a cofactor.

The catalysed reaction is a UDP-3-O-[(3R)-3-hydroxyacyl]-N-acetyl-alpha-D-glucosamine + H2O = a UDP-3-O-[(3R)-3-hydroxyacyl]-alpha-D-glucosamine + acetate. The protein operates within glycolipid biosynthesis; lipid IV(A) biosynthesis; lipid IV(A) from (3R)-3-hydroxytetradecanoyl-[acyl-carrier-protein] and UDP-N-acetyl-alpha-D-glucosamine: step 2/6. Its function is as follows. Catalyzes the hydrolysis of UDP-3-O-myristoyl-N-acetylglucosamine to form UDP-3-O-myristoylglucosamine and acetate, the committed step in lipid A biosynthesis. The chain is UDP-3-O-acyl-N-acetylglucosamine deacetylase from Lawsonia intracellularis (strain PHE/MN1-00).